The sequence spans 292 residues: Protoheme IX farnesyltransferase (292 aa).

Transmembrane regions (helical) follow at residues 13–33 (ILFGNFITTLGGFFLAAQGSI), 35–55 (ILLLLLTLIGTTLVVASGCVV), 84–104 (VALVYAFVLGVMGFSILWFGV), 106–126 (GYAFLFAMIGFIVYVGFYSLW), 135–155 (TVIGSISGASPPVIGYTAVTH), 161–181 (ALLLFLAYALWQMPHSWAIAI), 206–226 (IECVIYILLFAAVLNGLYCFG), 231–251 (FFLITFNALTAYWFYLSIIGF), and 263–283 (FFLYSVILITLLSLSFSFTYQ).

Belongs to the UbiA prenyltransferase family. Protoheme IX farnesyltransferase subfamily.

The protein localises to the cell inner membrane. The enzyme catalyses heme b + (2E,6E)-farnesyl diphosphate + H2O = Fe(II)-heme o + diphosphate. It functions in the pathway porphyrin-containing compound metabolism; heme O biosynthesis; heme O from protoheme: step 1/1. In terms of biological role, converts heme B (protoheme IX) to heme O by substitution of the vinyl group on carbon 2 of heme B porphyrin ring with a hydroxyethyl farnesyl side group. The protein is Protoheme IX farnesyltransferase of Acinetobacter baumannii (strain AB307-0294).